The following is a 678-amino-acid chain: AAC-rich mRNA clone AAC4 protein (678 aa).

Positions 55 to 73 (NNNNNNNNNNNNNNNNNNN) are enriched in low complexity. The tract at residues 55 to 75 (NNNNNNNNNNNNNNNNNNNTS) is disordered. The helical transmembrane segment at 243–263 (IIPIYHEIILVLCNWLVVAFY) threads the bilayer. Low complexity predominate over residues 318–346 (NNNNNNNNNNNNNNNNNNNNNNNNKTNNN). A disordered region spans residues 318–347 (NNNNNNNNNNNNNNNNNNNNNNNNKTNNNQ).

The protein resides in the membrane. The chain is AAC-rich mRNA clone AAC4 protein (AAC4) from Dictyostelium discoideum (Social amoeba).